Here is a 405-residue protein sequence, read N- to C-terminus: Probable tRNA sulfurtransferase (405 aa).

Positions 60–165 (DKIDQRLKLV…QDAIYISNQL (106 aa)) constitute a THUMP domain. Residues 183 to 184 (ML), 208 to 209 (HF), Arg-265, Gly-287, and Gln-296 each bind ATP.

This sequence belongs to the ThiI family.

It localises to the cytoplasm. The catalysed reaction is [ThiI sulfur-carrier protein]-S-sulfanyl-L-cysteine + a uridine in tRNA + 2 reduced [2Fe-2S]-[ferredoxin] + ATP + H(+) = [ThiI sulfur-carrier protein]-L-cysteine + a 4-thiouridine in tRNA + 2 oxidized [2Fe-2S]-[ferredoxin] + AMP + diphosphate. It catalyses the reaction [ThiS sulfur-carrier protein]-C-terminal Gly-Gly-AMP + S-sulfanyl-L-cysteinyl-[cysteine desulfurase] + AH2 = [ThiS sulfur-carrier protein]-C-terminal-Gly-aminoethanethioate + L-cysteinyl-[cysteine desulfurase] + A + AMP + 2 H(+). It functions in the pathway cofactor biosynthesis; thiamine diphosphate biosynthesis. Catalyzes the ATP-dependent transfer of a sulfur to tRNA to produce 4-thiouridine in position 8 of tRNAs, which functions as a near-UV photosensor. Also catalyzes the transfer of sulfur to the sulfur carrier protein ThiS, forming ThiS-thiocarboxylate. This is a step in the synthesis of thiazole, in the thiamine biosynthesis pathway. The sulfur is donated as persulfide by IscS. In Lactobacillus gasseri (strain ATCC 33323 / DSM 20243 / BCRC 14619 / CIP 102991 / JCM 1131 / KCTC 3163 / NCIMB 11718 / NCTC 13722 / AM63), this protein is Probable tRNA sulfurtransferase.